The sequence spans 387 residues: MKRTRIEDDFNPVYPYDTFSTPSIPYVAPPFVSSDGLQEKPPGVLALKYTDPITTNAKHELTLKLGSNITLENGLLSATVPTVSPPLTNSNNSLGLATSAPIAVSANSLTLATAAPLTVSNNQLSINAGRGLVITNNALTVNPTGALGFNNTGALQLNAAGGMRVDGANLILHVAYPFEAINQLTLRLENGLEVTSGGKLNVKLGSGLQFDSNGRIAISNSNRTRSVPSLTTIWSISPTPNCSIYETQDANLFLCLTKNGAHVLGTITIKGLKGALREMHDNALSLKLPFDNQGNLLNCALESSTWRYQETNAVASNALTFMPNSTVYPRNKTAHPGNMLIQISPNITFSVVYNEINSGYAFTFKWSAEPGKPFHPPTAVFCYITEQ.

It belongs to the adenoviridae fiber family. In terms of assembly, homotrimer. Interacts with host receptor CXCAR. Interacts (via N-terminal tail region) with pentons.

It is found in the virion. The protein localises to the host nucleus. Its function is as follows. Forms spikes that protrude from each vertex of the icosahedral capsid. Interacts with host receptor CXCAR to provide virion initial attachment to target cell. Fiber proteins are shed during virus entry, when virus is still at the cell surface. The sequence is that of Fiber protein 2 from Homo sapiens (Human).